The following is a 471-amino-acid chain: Tryptophanase (471 aa).

Residue Lys270 is modified to N6-(pyridoxal phosphate)lysine.

This sequence belongs to the beta-eliminating lyase family. In terms of assembly, homotetramer. It depends on pyridoxal 5'-phosphate as a cofactor.

The catalysed reaction is L-tryptophan + H2O = indole + pyruvate + NH4(+). Its pathway is amino-acid degradation; L-tryptophan degradation via pyruvate pathway; indole and pyruvate from L-tryptophan: step 1/1. The chain is Tryptophanase from Histophilus somni (strain 129Pt) (Haemophilus somnus).